Reading from the N-terminus, the 574-residue chain is Probable inactive serine/threonine-protein kinase slob2 (574 aa).

A helical transmembrane segment spans residues 6 to 26; the sequence is YIIIAAVGGFAILTFIIIVVL. Residues 166 to 346 enclose the Protein kinase domain; the sequence is YADRGSLRDF…PLHRLTYTSR (181 aa). N-linked (GlcNAc...) asparagine glycosylation is present at Asn-358. The tract at residues 366–386 is disordered; it reads SKPNSKDLSQPKLKDLKKQKK. N-linked (GlcNAc...) asparagine glycans are attached at residues Asn-440, Asn-449, Asn-453, Asn-456, Asn-464, Asn-470, Asn-477, and Asn-483. Over residues 450–493 the composition is skewed to low complexity; that stretch reads TTTNTTNTSTSSSLNSSFNSNVSTSYSNATTTTNTTSASSVSPP. The interval 450-574 is disordered; it reads TTTNTTNTST…DKSGPLLKKS (125 aa). Residues 494-539 are compositionally biased toward pro residues; the sequence is ISSPPPPPPPPPPSKSSGPPPPPPPPPKSSGPPPPPPPKSSPPPPA. The segment covering 546–556 has biased composition (low complexity); sequence LLSSIESFSSS.

It belongs to the protein kinase superfamily. Ser/Thr protein kinase family.

It localises to the membrane. The protein is Probable inactive serine/threonine-protein kinase slob2 (slob2) of Dictyostelium discoideum (Social amoeba).